A 520-amino-acid polypeptide reads, in one-letter code: Transactivator/viroplasmin protein (520 aa).

The disordered stretch occupies residues 487–520 (QNASADSGPKDGPPPTRSIVEKEDVPTTSSKQVD).

Belongs to the caulimoviridae viroplasmin family.

It localises to the host cytoplasm. In terms of biological role, enhances the ribosomal termination-reinitiation event leading to the translation of major open reading frames on the polycistronic viral RNAs. The protein is Transactivator/viroplasmin protein of Arabidopsis thaliana (Mouse-ear cress).